The sequence spans 364 residues: Chorismate synthase (364 aa).

2 residues coordinate NADP(+): Arg-48 and Arg-54. FMN-binding positions include 125 to 127 (RSS), 238 to 239 (NA), Gly-278, 293 to 297 (KPTSS), and Arg-319.

The protein belongs to the chorismate synthase family. Homotetramer. The cofactor is FMNH2.

The enzyme catalyses 5-O-(1-carboxyvinyl)-3-phosphoshikimate = chorismate + phosphate. It functions in the pathway metabolic intermediate biosynthesis; chorismate biosynthesis; chorismate from D-erythrose 4-phosphate and phosphoenolpyruvate: step 7/7. Functionally, catalyzes the anti-1,4-elimination of the C-3 phosphate and the C-6 proR hydrogen from 5-enolpyruvylshikimate-3-phosphate (EPSP) to yield chorismate, which is the branch point compound that serves as the starting substrate for the three terminal pathways of aromatic amino acid biosynthesis. This reaction introduces a second double bond into the aromatic ring system. The chain is Chorismate synthase from Shewanella sediminis (strain HAW-EB3).